The sequence spans 1317 residues: MLDVNFFDELRIGLATADDIRNWSYGEVKKPETINYRTLKPEKDGLFCEKIFGPTRDWECYCGKYKRVRFKGIICERCGVEVTRAKVRRERMGHIELAAPVTHIWYFKGVPSRLGYLLDLAPKDLEKIIYFAAYVITSVDDEMRHNELSTLEAEMAVEKKAVEDQRDADLEARAQKLEADLAELEAEGAKSDVRRKVRDSGEREMRQLRDRAQRELDRLDEIWNTFTKLAPKQLIVDEVLYRELQDRYGEYFTGAMGAESIKKLIENFDIDAEAESLREVIRSGKGQKKLRALKRLKVVAAFQQSGNSPMGMVLDAVPVIPPELRPMVQLDGGRFATSDLNDLYRRVINRNNRLKRLIDLGAPEIIVNNEKRMLQESVDALFDNGRRGRPVTGPGNRPLKSLSDLLKGKQGRFRQNLLGKRVDYSGRSVIVVGPQLKLHQCGLPKLMALELFKPFVMKRLVDLNHAQNIKSAKRMVERQRPQVWDVLEEVIAEHPVLLNRAPTLHRLGIQAFEPQLVEGKAIQLHPLVCEAFNADFDGDQMAVHLPLSAEAQAEARILMLSSNNILSPASGKPLAMPRLDMVTGLYYLTTLVEGATGEYQAATKDAPEQGVYSSPAEAIMAMDRGALSVRAKIKVRLTELRPPTDLEAQLFENGWKPGDAWTAETTLGRVMFNELLPKSYPFVNEQMHKKVQARIINDLAERFPMIVVAQTVDKLKDAGFYWATRSGVTVSMADVLVPPQKQEILERHEAEADAIERKYQRGALNHTERNESLVKIWQDATEEVGKALEEFYPADNPIITIVKSGATGNLTQTRTLAGMKGLVTNPKGEFIPRPIKSSFREGLTVLEYFINTHGARKGLADTALRTADSGYLTRRLVDVSQDVIVREHDCETERGINVTLAERGPDGTLIRDAHVETSAFARTLATDAVDANGNVIIERGHDLGDPAIDALLAAGITTVKVRSVLTCTSATGVCAMCYGRSMATGKLVDIGEAVGIVAAQSIGEPGTQLTMRTFHQGGVTGGADIVGGLPRVQELFEARVPRNKAPIADVAGRVRLEESDKFFKITIVPDDGGEEVVYDKLSKRQRLRVITHEDGTEGVLSDGDHVEVGDQLMEGAADPHEVLRVQGPREVQIHLVKEVQEVYRAQGVSIHDKHIEVIVRQMLRRVTIIDSGSTEFLPGSLTERAEFEAENRRVVAEGGEPAAGRPVLMGITKASLATDSWLSAASFQETTRVLTDAAINCRSDKLNGLKENVIIGKLIPAGTGISRYRNIQVQPTEEARAAAYTIPSYEDQYYSPDFGQATGAAVPLDDYGYSDYR.

Residues Cys60, Cys62, Cys75, and Cys78 each contribute to the Zn(2+) site. Positions 535, 537, and 539 each coordinate Mg(2+). Cys890, Cys967, Cys974, and Cys977 together coordinate Zn(2+).

Belongs to the RNA polymerase beta' chain family. As to quaternary structure, the RNAP catalytic core consists of 2 alpha, 1 beta, 1 beta' and 1 omega subunit. When a sigma factor is associated with the core the holoenzyme is formed, which can initiate transcription. The cofactor is Mg(2+). Zn(2+) serves as cofactor.

It catalyses the reaction RNA(n) + a ribonucleoside 5'-triphosphate = RNA(n+1) + diphosphate. In terms of biological role, DNA-dependent RNA polymerase catalyzes the transcription of DNA into RNA using the four ribonucleoside triphosphates as substrates. This chain is DNA-directed RNA polymerase subunit beta', found in Mycolicibacterium smegmatis (strain ATCC 700084 / mc(2)155) (Mycobacterium smegmatis).